A 190-amino-acid chain; its full sequence is ATP synthase subunit b (190 aa).

Residues 34–54 traverse the membrane as a helical segment; that stretch reads LDIFETNLINLAILVGILFYF.

This sequence belongs to the ATPase B chain family. F-type ATPases have 2 components, F(1) - the catalytic core - and F(0) - the membrane proton channel. F(1) has five subunits: alpha(3), beta(3), gamma(1), delta(1), epsilon(1). F(0) has four main subunits: a(1), b(1), b'(1) and c(10-14). The alpha and beta chains form an alternating ring which encloses part of the gamma chain. F(1) is attached to F(0) by a central stalk formed by the gamma and epsilon chains, while a peripheral stalk is formed by the delta, b and b' chains.

It is found in the cellular thylakoid membrane. Functionally, f(1)F(0) ATP synthase produces ATP from ADP in the presence of a proton or sodium gradient. F-type ATPases consist of two structural domains, F(1) containing the extramembraneous catalytic core and F(0) containing the membrane proton channel, linked together by a central stalk and a peripheral stalk. During catalysis, ATP synthesis in the catalytic domain of F(1) is coupled via a rotary mechanism of the central stalk subunits to proton translocation. In terms of biological role, component of the F(0) channel, it forms part of the peripheral stalk, linking F(1) to F(0). The protein is ATP synthase subunit b of Nostoc punctiforme (strain ATCC 29133 / PCC 73102).